A 391-amino-acid polypeptide reads, in one-letter code: E1B 55 kDa protein (391 aa).

Residue Ser387 is modified to Phosphoserine.

The protein belongs to the adenoviridae E1B 55 kDa protein family. Interacts with host PML-4 and PML-5; this interaction promotes efficient subnuclear targeting of E1B-55K to PML nuclear bodies. Interacts with E4-ORF3 protein. Interacts with E4-ORF6 protein.

Its subcellular location is the host nucleus. It is found in the host cytoplasm. Its function is as follows. Plays a major role to prevent cellular inhibition of viral genome replication. Assembles an SCF-like E3 ubiquitin ligase complex based on the cellular proteins ELOB, ELOC, CUL5 and RBX1, in cooperation with viral E4orf6. This viral RING-type ligase ubiquitinates cellular substrates and targets them to proteasomal degradation: TP53/p53, LIG4, MRE11-RAD50-NBS1 (MRN) complex, ITGA3, DAXX and BLM. E1B-55K probably acts as the substrate-specific adapter of the SCF-like E3 ubiquitin ligase complex. Degradation of host TP53/p53 activity is essential for preventing E1A-induced TP53 accumulation that would otherwise lead to cell apoptosis and growth arrest. E1B-55K also inactivates TP53 transcription-factor activity by binding its transactivation domain. E1B-55K also functions as a SUMO1 E3 ligase for TP53 which causes the latter to be sequestered in promyelocytic leukemia (PML) nuclear bodies thereby contributing to maximal inhibition of TP53 function. The sequence is that of E1B 55 kDa protein from Tree shrew adenovirus serotype 1 (TSAdV-1).